The sequence spans 176 residues: Photosystem I assembly protein Ycf4 (176 aa).

Transmembrane regions (helical) follow at residues 22–42 (FVWA…GTAS) and 48–68 (LIAF…GLFI).

This sequence belongs to the Ycf4 family.

The protein localises to the plastid thylakoid membrane. Its function is as follows. Seems to be required for the assembly of the photosystem I complex. This Cuscuta gronovii (Common dodder) protein is Photosystem I assembly protein Ycf4.